The sequence spans 175 residues: 2-oxo-4-hydroxy-4-carboxy-5-ureidoimidazoline decarboxylase (175 aa).

Histidine 67 (proton donor) is an active-site residue. Substrate contacts are provided by residues proline 68, 84 to 88, and 119 to 123; these read SQNEQ and FVICA. The Microbody targeting signal motif lies at 173–175; that stretch reads TKL.

Belongs to the OHCU decarboxylase family.

It is found in the peroxisome. The catalysed reaction is 5-hydroxy-2-oxo-4-ureido-2,5-dihydro-1H-imidazole-5-carboxylate + H(+) = (S)-allantoin + CO2. The protein operates within purine metabolism; urate degradation; (S)-allantoin from urate: step 3/3. Functionally, catalyzes the stereoselective decarboxylation of 2-oxo-4-hydroxy-4-carboxy-5-ureidoimidazoline (OHCU) to (S)-allantoin. This Xenopus laevis (African clawed frog) protein is 2-oxo-4-hydroxy-4-carboxy-5-ureidoimidazoline decarboxylase (urad).